We begin with the raw amino-acid sequence, 496 residues long: ADP-dependent glucokinase (496 aa).

The first 22 residues, 1–22 (MALWRGSACAGFLALAVGCVFL), serve as a signal peptide directing secretion. The region spanning 52–496 (SPESRLAAAW…GLFYSEARPD (445 aa)) is the ADPK domain. Glu297, Glu328, and Asp481 together coordinate Mg(2+). Residue Asp481 is the Proton acceptor of the active site.

Belongs to the ADP-dependent glucokinase family. In terms of assembly, monomer. It depends on Mg(2+) as a cofactor.

It is found in the secreted. It carries out the reaction D-glucose + ADP = D-glucose 6-phosphate + AMP + H(+). It participates in carbohydrate degradation; glycolysis. Its function is as follows. Catalyzes the phosphorylation of D-glucose to D-glucose 6-phosphate using ADP as the phosphate donor. GDP and CDP can replace ADP, but with reduced efficiency. The chain is ADP-dependent glucokinase (Adpgk) from Mus musculus (Mouse).